Consider the following 69-residue polypeptide: ATP synthase F(0) complex subunit e, mitochondrial (69 aa).

K34 is modified (N6-acetyllysine).

Belongs to the ATPase e subunit family. Component of the ATP synthase complex composed at least of ATP5F1A/subunit alpha, ATP5F1B/subunit beta, ATP5MC1/subunit c (homooctomer), MT-ATP6/subunit a, MT-ATP8/subunit 8, ATP5ME/subunit e, ATP5MF/subunit f, ATP5MG/subunit g, ATP5MK/subunit k, ATP5MJ/subunit j, ATP5F1C/subunit gamma, ATP5F1D/subunit delta, ATP5F1E/subunit epsilon, ATP5PF/subunit F6, ATP5PB/subunit b, ATP5PD/subunit d, ATP5PO/subunit OSCP. ATP synthase complex consists of a soluble F(1) head domain (subunits alpha(3) and beta(3)) - the catalytic core - and a membrane F(0) domain - the membrane proton channel (subunits c, a, 8, e, f, g, k and j). These two domains are linked by a central stalk (subunits gamma, delta, and epsilon) rotating inside the F1 region and a stationary peripheral stalk (subunits F6, b, d, and OSCP).

Its subcellular location is the mitochondrion. It localises to the mitochondrion inner membrane. Functionally, subunit e, of the mitochondrial membrane ATP synthase complex (F(1)F(0) ATP synthase or Complex V) that produces ATP from ADP in the presence of a proton gradient across the membrane which is generated by electron transport complexes of the respiratory chain. ATP synthase complex consist of a soluble F(1) head domain - the catalytic core - and a membrane F(1) domain - the membrane proton channel. These two domains are linked by a central stalk rotating inside the F(1) region and a stationary peripheral stalk. During catalysis, ATP synthesis in the catalytic domain of F(1) is coupled via a rotary mechanism of the central stalk subunits to proton translocation. In vivo, can only synthesize ATP although its ATP hydrolase activity can be activated artificially in vitro. Part of the complex F(0) domain. The sequence is that of ATP synthase F(0) complex subunit e, mitochondrial from Cricetulus longicaudatus (Long-tailed dwarf hamster).